The sequence spans 369 residues: Putative agmatine deiminase (369 aa).

Cys355 (amidino-cysteine intermediate) is an active-site residue.

It belongs to the agmatine deiminase family.

The enzyme catalyses agmatine + H2O = N-carbamoylputrescine + NH4(+). This is Putative agmatine deiminase from Marinomonas sp. (strain MWYL1).